A 510-amino-acid polypeptide reads, in one-letter code: Ninja-family protein mc410 (510 aa).

3 disordered regions span residues 1 to 179, 323 to 414, and 481 to 510; these read MDEN…RQIL, HPSH…PSEF, and RHASVEQTSQEPGTGVSSFPSSNPAASAQS. Composition is skewed to basic and acidic residues over residues 31–44 and 103–146; these read SKVEEVDRDGKVIN and RPVE…DKTR. Residues 148 to 160 are compositionally biased toward polar residues; sequence SHISITTDEGSTA. Basic and acidic residues-rich tracts occupy residues 363–389 and 397–406; these read RAMEHVKGNGRQHKAEETSNSRGEENV and RAKDPPDQPR. Polar residues predominate over residues 485-496; the sequence is VEQTSQEPGTGV. Positions 497 to 510 are enriched in low complexity; it reads SSFPSSNPAASAQS.

This sequence belongs to the Ninja family.

The protein localises to the nucleus. This is Ninja-family protein mc410 (MC410) from Nicotiana tabacum (Common tobacco).